The sequence spans 278 residues: Diaminopimelate epimerase (278 aa).

Positions 13, 49, and 68 each coordinate substrate. Cysteine 77 serves as the catalytic Proton donor. Substrate contacts are provided by residues 78–79 (GN), asparagine 161, asparagine 194, and 212–213 (ER). The Proton acceptor role is filled by cysteine 221. 222-223 (GT) provides a ligand contact to substrate.

It belongs to the diaminopimelate epimerase family. Homodimer.

The protein localises to the cytoplasm. It catalyses the reaction (2S,6S)-2,6-diaminopimelate = meso-2,6-diaminopimelate. It functions in the pathway amino-acid biosynthesis; L-lysine biosynthesis via DAP pathway; DL-2,6-diaminopimelate from LL-2,6-diaminopimelate: step 1/1. In terms of biological role, catalyzes the stereoinversion of LL-2,6-diaminopimelate (L,L-DAP) to meso-diaminopimelate (meso-DAP), a precursor of L-lysine and an essential component of the bacterial peptidoglycan. The sequence is that of Diaminopimelate epimerase from Nitrosomonas eutropha (strain DSM 101675 / C91 / Nm57).